The following is a 154-amino-acid chain: Superoxide dismutase [Cu-Zn] (154 aa).

Cu cation-binding residues include His-47, His-49, and His-64. A disulfide bridge connects residues Cys-58 and Cys-147. Zn(2+) is bound by residues His-64, His-72, His-81, and Asp-84. Residue His-121 participates in Cu cation binding. Residue Arg-144 participates in substrate binding.

It belongs to the Cu-Zn superoxide dismutase family. As to quaternary structure, homodimer. Cu cation serves as cofactor. The cofactor is Zn(2+).

Its subcellular location is the cytoplasm. The enzyme catalyses 2 superoxide + 2 H(+) = H2O2 + O2. Its function is as follows. Destroys radicals which are normally produced within the cells and which are toxic to biological systems. The polypeptide is Superoxide dismutase [Cu-Zn] (SOD1) (Podospora anserina (Pleurage anserina)).